A 419-amino-acid chain; its full sequence is UDP-N-acetylglucosamine 1-carboxyvinyltransferase (419 aa).

22 to 23 contacts phosphoenolpyruvate; the sequence is KN. Residue Arg-93 participates in UDP-N-acetyl-alpha-D-glucosamine binding. The active-site Proton donor is Cys-117. Cys-117 bears the 2-(S-cysteinyl)pyruvic acid O-phosphothioketal mark. Positions 306 and 328 each coordinate UDP-N-acetyl-alpha-D-glucosamine.

Belongs to the EPSP synthase family. MurA subfamily.

Its subcellular location is the cytoplasm. The catalysed reaction is phosphoenolpyruvate + UDP-N-acetyl-alpha-D-glucosamine = UDP-N-acetyl-3-O-(1-carboxyvinyl)-alpha-D-glucosamine + phosphate. The protein operates within cell wall biogenesis; peptidoglycan biosynthesis. Functionally, cell wall formation. Adds enolpyruvyl to UDP-N-acetylglucosamine. This chain is UDP-N-acetylglucosamine 1-carboxyvinyltransferase, found in Idiomarina loihiensis (strain ATCC BAA-735 / DSM 15497 / L2-TR).